A 436-amino-acid polypeptide reads, in one-letter code: Adenylyltransferase and sulfurtransferase UBA4 (436 aa).

Residues G74, D95, 102–106 (SNLHR), K119, and 163–164 (DT) contribute to the ATP site. Residues C205 and C208 each contribute to the Zn(2+) site. C222 (glycyl thioester intermediate; for adenylyltransferase activity) is an active-site residue. Zn(2+)-binding residues include C283 and C286. One can recognise a Rhodanese domain in the interval 335–434 (NEKDHILIDV…YIDEEDHSYP (100 aa)). The active-site Cysteine persulfide intermediate; for sulfurtransferase activity is the C393.

In the N-terminal section; belongs to the HesA/MoeB/ThiF family. UBA4 subfamily. Requires Zn(2+) as cofactor.

The protein localises to the cytoplasm. It is found in the cytosol. The protein operates within tRNA modification; 5-methoxycarbonylmethyl-2-thiouridine-tRNA biosynthesis. Plays a central role in 2-thiolation of mcm(5)S(2)U at tRNA wobble positions of cytosolic tRNA(Lys), tRNA(Glu) and tRNA(Gln). Acts by mediating the C-terminal thiocarboxylation of sulfur carrier URM1. Its N-terminus first activates URM1 as acyl-adenylate (-COAMP), then the persulfide sulfur on the catalytic cysteine is transferred to URM1 to form thiocarboxylation (-COSH) of its C-terminus. The reaction probably involves hydrogen sulfide that is generated from the persulfide intermediate and that acts as a nucleophile towards URM1. Subsequently, a transient disulfide bond is formed. Does not use thiosulfate as sulfur donor; NFS1 probably acting as a sulfur donor for thiocarboxylation reactions. Prior mcm(5) tRNA modification by the elongator complex is required for 2-thiolation. May also be involved in protein urmylation. This chain is Adenylyltransferase and sulfurtransferase UBA4, found in Vanderwaltozyma polyspora (strain ATCC 22028 / DSM 70294 / BCRC 21397 / CBS 2163 / NBRC 10782 / NRRL Y-8283 / UCD 57-17) (Kluyveromyces polysporus).